The primary structure comprises 143 residues: Holo-[acyl-carrier-protein] synthase (143 aa).

Residues aspartate 9 and glutamate 63 each contribute to the Mg(2+) site.

The protein belongs to the P-Pant transferase superfamily. AcpS family. Requires Mg(2+) as cofactor.

The protein localises to the cytoplasm. It catalyses the reaction apo-[ACP] + CoA = holo-[ACP] + adenosine 3',5'-bisphosphate + H(+). Functionally, transfers the 4'-phosphopantetheine moiety from coenzyme A to a Ser of acyl-carrier-protein. The polypeptide is Holo-[acyl-carrier-protein] synthase (Burkholderia pseudomallei (strain 668)).